Here is a 172-residue protein sequence, read N- to C-terminus: Bifunctional protein PyrR (172 aa).

A PRPP-binding motif is present at residues 90–102; sequence LVLVDDVLMSGRT.

The protein belongs to the purine/pyrimidine phosphoribosyltransferase family. PyrR subfamily.

The catalysed reaction is UMP + diphosphate = 5-phospho-alpha-D-ribose 1-diphosphate + uracil. In terms of biological role, regulates the transcription of the pyrimidine nucleotide (pyr) operon in response to exogenous pyrimidines. Its function is as follows. Also displays a weak uracil phosphoribosyltransferase activity which is not physiologically significant. This chain is Bifunctional protein PyrR, found in Pseudomonas entomophila (strain L48).